The following is a 104-amino-acid chain: Large ribosomal subunit protein uL24 (104 aa).

This sequence belongs to the universal ribosomal protein uL24 family. As to quaternary structure, part of the 50S ribosomal subunit.

Functionally, one of two assembly initiator proteins, it binds directly to the 5'-end of the 23S rRNA, where it nucleates assembly of the 50S subunit. In terms of biological role, one of the proteins that surrounds the polypeptide exit tunnel on the outside of the subunit. This Pseudomonas aeruginosa (strain LESB58) protein is Large ribosomal subunit protein uL24.